Reading from the N-terminus, the 302-residue chain is Dioxygenase ALT11 (302 aa).

The segment at 1 to 22 (MSSPELPSQMGVPNGHTKLQEV) is disordered. Residues His-147, Asp-149, and His-223 each contribute to the Fe cation site.

Belongs to the PhyH family. As to quaternary structure, homodimer. The cofactor is Fe cation.

The protein operates within mycotoxin biosynthesis. In terms of biological role, dioxygenase; part of the gene cluster that mediates the biosynthesis of the host-selective toxins (HSTs) AAL-toxins, sphinganine-analog mycotoxins responsible for Alternaria stem canker on tomato by the tomato pathotype. The biosynthesis starts with the polyketide synthase ALT1-catalyzed C-16 carbon chain assembly from one starter acetyl-CoA unit with malonyl-CoA extender units. ALT1 also selectively transfers methyl groups at the first and the third cycle of chain elongation for AAL toxin. The C-16 polyketide chain is released from the enzyme by a nucleophilic attack of a carbanion, which is derived from R-carbon of glycin by decarboxylation, on the carbonyl carbon of polyketide acyl chain. This step is probably catalyzed by a pyridoxal 5'-phosphate-dependent aminoacyl transferase ALT4. The respective functions of the other enzymes encoded by the cluster have still to be elucidated. The sphingosine N-acyltransferase-like protein ALT7 seems not to act as a resistance/self-tolerance factor against the toxin in the toxin biosynthetic gene cluster, contrary to what is expected. In Alternaria alternata (Alternaria rot fungus), this protein is Dioxygenase ALT11.